A 270-amino-acid chain; its full sequence is MKSNNNPKTMVVERYTITDRIAHTVHAIAMIVLIITGLKIYAGWEFMSFHTARTLHMIAVPFLLAVNWILIPYNIFSEGHGLMGKISHFVDHYIFGPKDLARLVGIIKNFFGKGEYPAFTVYDEKTGHYKTKLHPLMKILIPLEGLALFLITVSGIVLYKLDWSLFGLPVAQWIISISGMIAPTFGMTPVGFLRVLHLLMTYWFIFELVVHVGILEFDPRVWKYYKAIFWSGKEDLSDRHFVEVARNNPNHLPDRELWRDPSDKPSEVKE.

5 helical membrane-spanning segments follow: residues Ala27–Met47, Met57–Ser77, Ile139–Tyr159, Trp173–Leu193, and Val195–Leu215.

The protein belongs to the HupC/HyaC/HydC family. As to quaternary structure, composed of a large subunit (VhtA), a small subunit (VhtG) and a cytochrome subunit (VhtC). Heme b serves as cofactor.

Its subcellular location is the cell membrane. The enzyme catalyses methanophenazine + H2 = dihydromethanophenazine. In terms of biological role, part of the F420 non-reducing hydrogenase II complex that catalyzes the reduction of methanophenazine to dihydromethanophenazine. The chain is F420 non-reducing hydrogenase II cytochrome subunit from Methanosarcina mazei (strain ATCC BAA-159 / DSM 3647 / Goe1 / Go1 / JCM 11833 / OCM 88) (Methanosarcina frisia).